Reading from the N-terminus, the 567-residue chain is Urease subunit alpha (567 aa).

The Urease domain occupies 129 to 567 (GGIDAHIHFI…LPMAQRYFLF (439 aa)). The Ni(2+) site is built by H134, H136, and K217. Position 217 is an N6-carboxylysine (K217). Residue H219 participates in substrate binding. The Ni(2+) site is built by H246 and H272. Residue H320 is the Proton donor of the active site. Position 360 (D360) interacts with Ni(2+).

It belongs to the metallo-dependent hydrolases superfamily. Urease alpha subunit family. Heterotrimer of UreA (gamma), UreB (beta) and UreC (alpha) subunits. Three heterotrimers associate to form the active enzyme. Ni cation serves as cofactor. Post-translationally, carboxylation allows a single lysine to coordinate two nickel ions.

Its subcellular location is the cytoplasm. It catalyses the reaction urea + 2 H2O + H(+) = hydrogencarbonate + 2 NH4(+). The protein operates within nitrogen metabolism; urea degradation; CO(2) and NH(3) from urea (urease route): step 1/1. The chain is Urease subunit alpha from Teredinibacter turnerae (strain ATCC 39867 / T7901).